Here is a 351-residue protein sequence, read N- to C-terminus: 1-acylglycerol-3-phosphate O-acyltransferase ABHD5 (351 aa).

Residues 79-184 (PLVLLHGFGG…LILVEPWGFP (106 aa)) form the AB hydrolase-1 domain. Residue serine 124 is modified to Phosphoserine. Positions 329–334 (HYVYAD) match the HXXXXD motif motif.

It belongs to the peptidase S33 family. ABHD4/ABHD5 subfamily. Interacts with ADRP and PLIN. Interacts with PNPLA2. Interacts with PLIN5; promotes interaction with PNPLA2.

The protein localises to the cytoplasm. The protein resides in the lipid droplet. The catalysed reaction is a 1-acyl-sn-glycero-3-phosphate + an acyl-CoA = a 1,2-diacyl-sn-glycero-3-phosphate + CoA. It carries out the reaction 1-(9Z-octadecenoyl)-sn-glycero-3-phosphate + (9Z)-octadecenoyl-CoA = 1,2-di-(9Z-octadecenoyl)-sn-glycero-3-phosphate + CoA. It catalyses the reaction 1-(9Z-octadecenoyl)-sn-glycero-3-phosphate + hexadecanoyl-CoA = 1-(9Z)-octadecenoyl-2-hexadecanoyl-sn-glycero-3-phosphate + CoA. The enzyme catalyses 1-(9Z-octadecenoyl)-sn-glycero-3-phosphate + octadecanoyl-CoA = 1-(9Z-octadecenoyl)-2-octadecanoyl-sn-glycero-3-phosphate + CoA. The catalysed reaction is 1-(9Z-octadecenoyl)-sn-glycero-3-phosphate + (5Z,8Z,11Z,14Z)-eicosatetraenoyl-CoA = 1-(9Z)-octadecenoyl-2-(5Z,8Z,11Z,14Z)-eicosatetraenoyl-sn-glycero-3-phosphate + CoA. It carries out the reaction eicosanoyl-CoA + 1-(9Z-octadecenoyl)-sn-glycero-3-phosphate = 1-(9Z)-octadecenoyl-2-eicosanoyl-sn-glycero-3-phosphate + CoA. It catalyses the reaction 1-hexadecanoyl-sn-glycero-3-phosphate + (9Z)-octadecenoyl-CoA = 1-hexadecanoyl-2-(9Z-octadecenoyl)-sn-glycero-3-phosphate + CoA. The enzyme catalyses 1-octadecanoyl-sn-glycero-3-phosphate + (9Z)-octadecenoyl-CoA = 1-octadecanoyl-2-(9Z-octadecenoyl)-sn-glycero-3-phosphate + CoA. The catalysed reaction is 1-(5Z,8Z,11Z,14Z-eicosatetraenoyl)-sn-glycero-3-phosphate + (9Z)-octadecenoyl-CoA = 1-(5Z,8Z,11Z,14Z)-eicosatetraenoyl-2-(9Z)-octadecenoyl-sn-glycero-3-phosphate + CoA. With respect to regulation, acyltransferase activity is inhibited by detergents such as Triton X-100 and 3-[(3-cholamidopropyl)dimethylammonio]-1-propanesulfonate (CHAPS). Acyltransferase activity is inhibited by the presence of magnesium and calcium. Its function is as follows. Coenzyme A-dependent lysophosphatidic acid acyltransferase that catalyzes the transfer of an acyl group on a lysophosphatidic acid. Functions preferentially with 1-oleoyl-lysophosphatidic acid followed by 1-palmitoyl-lysophosphatidic acid, 1-stearoyl-lysophosphatidic acid and 1-arachidonoyl-lysophosphatidic acid as lipid acceptor. Functions preferentially with arachidonoyl-CoA followed by oleoyl-CoA as acyl group donors. Functions in phosphatidic acid biosynthesis. May regulate the cellular storage of triacylglycerol through activation of the phospholipase PNPLA2. Involved in keratinocyte differentiation. Regulates lipid droplet fusion. This chain is 1-acylglycerol-3-phosphate O-acyltransferase ABHD5, found in Rattus norvegicus (Rat).